The primary structure comprises 443 residues: Ribosomal protein uS12 methylthiotransferase RimO (443 aa).

Residues 11-121 (PTVGFVSLGC…VMEAVHGALP (111 aa)) enclose the MTTase N-terminal domain. 6 residues coordinate [4Fe-4S] cluster: C20, C56, C85, C152, C156, and C159. The 238-residue stretch at 138–375 (LTPRHYAYLK…METQAEISAA (238 aa)) folds into the Radical SAM core domain. Residues 378–443 (DAKIGRTIEV…DAHDLWATPV (66 aa)) enclose the TRAM domain.

The protein belongs to the methylthiotransferase family. RimO subfamily. Requires [4Fe-4S] cluster as cofactor.

It localises to the cytoplasm. The enzyme catalyses L-aspartate(89)-[ribosomal protein uS12]-hydrogen + (sulfur carrier)-SH + AH2 + 2 S-adenosyl-L-methionine = 3-methylsulfanyl-L-aspartate(89)-[ribosomal protein uS12]-hydrogen + (sulfur carrier)-H + 5'-deoxyadenosine + L-methionine + A + S-adenosyl-L-homocysteine + 2 H(+). Functionally, catalyzes the methylthiolation of an aspartic acid residue of ribosomal protein uS12. This Thiobacillus denitrificans (strain ATCC 25259 / T1) protein is Ribosomal protein uS12 methylthiotransferase RimO.